The chain runs to 400 residues: MSALPVVVTLLLCGQLLAVEISSEATADSCPKAPEIANSHVEYSVRYQCDKYYKLRAGDGVYTFNNKQWINKDIGQQLPECEDASCPEPPKIENGYVEHSIRFQCKTYYKLRSAGDGVYTFNSKKQWINKNVGQQLPECEAVCGKPKHPVDQVQRIIGGSLDAKGSFPWQAKMVSHHNLISGATLINERWLLTTAKNLYLGHTSDKKAKDIAPTLRLYVGKNQPVEVEKVVLHPDRSKVDIGLIKLRQKVPVNEKVMPICLPSKDYVAVGRVGYVSGWGRNANFNFTEHLKYIMLPVADQDKCVEHYENSTVPENKTDKSPVGVQPILNKNTFCVGLSKYQEDTCYGDAGSAFVVHDQEDDTWYAAGILSFDKSCAVAEYGVYVKVTSILDWVRKTIADN.

A signal peptide spans 1–18; sequence MSALPVVVTLLLCGQLLA. 2 Sushi domains span residues 28–83 and 84–141; these read DSCP…ECED and ASCP…ECEA. 3 disulfides stabilise this stretch: Cys49–Cys81, Cys105–Cys139, and Cys143–Cys260. Positions 156-398 constitute a Peptidase S1 domain; it reads IIGGSLDAKG…ILDWVRKTIA (243 aa). N-linked (GlcNAc...) asparagine glycans are attached at residues Asn285, Asn309, and Asn315. 2 cysteine pairs are disulfide-bonded: Cys303–Cys334 and Cys345–Cys375. The interval 312–317 is interaction with CD163; that stretch reads VPENKT.

This sequence belongs to the peptidase S1 family. In terms of assembly, tetramer of two alpha and two beta chains; disulfide-linked. The hemoglobin/haptoglobin complex is composed of a haptoglobin dimer bound to two hemoglobin alpha-beta dimers. Interacts with CD163. Interacts with ERGIC3. In terms of tissue distribution, expressed by the liver and secreted in plasma.

It is found in the secreted. Its subcellular location is the extracellular space. Functionally, as a result of hemolysis, hemoglobin is found to accumulate in the kidney and is secreted in the urine. Haptoglobin captures, and combines with free plasma hemoglobin to allow hepatic recycling of heme iron and to prevent kidney damage. Haptoglobin also acts as an antioxidant, has antibacterial activity and plays a role in modulating many aspects of the acute phase response. Hemoglobin/haptoglobin complexes are rapidly cleared by the macrophage CD163 scavenger receptor expressed on the surface of liver Kupfer cells through an endocytic lysosomal degradation pathway. The sequence is that of Haptoglobin (HP) from Cervus elaphus (Red deer).